The chain runs to 463 residues: Asparagine--tRNA ligase (463 aa).

Belongs to the class-II aminoacyl-tRNA synthetase family. Homodimer.

The protein localises to the cytoplasm. The enzyme catalyses tRNA(Asn) + L-asparagine + ATP = L-asparaginyl-tRNA(Asn) + AMP + diphosphate + H(+). In Clostridium novyi (strain NT), this protein is Asparagine--tRNA ligase.